Reading from the N-terminus, the 571-residue chain is Urease subunit alpha (571 aa).

A Urease domain is found at 133–571 (GGIDTHIHFV…LPLAQRYFLF (439 aa)). Ni(2+) contacts are provided by His138, His140, and Lys221. N6-carboxylysine is present on Lys221. His223 contributes to the substrate binding site. Ni(2+)-binding residues include His250 and His276. His324 (proton donor) is an active-site residue. Position 364 (Asp364) interacts with Ni(2+).

Belongs to the metallo-dependent hydrolases superfamily. Urease alpha subunit family. In terms of assembly, heterotrimer of UreA (gamma), UreB (beta) and UreC (alpha) subunits. Three heterotrimers associate to form the active enzyme. Ni cation serves as cofactor. Carboxylation allows a single lysine to coordinate two nickel ions.

It is found in the cytoplasm. The enzyme catalyses urea + 2 H2O + H(+) = hydrogencarbonate + 2 NH4(+). It participates in nitrogen metabolism; urea degradation; CO(2) and NH(3) from urea (urease route): step 1/1. The sequence is that of Urease subunit alpha from Anaeromyxobacter sp. (strain K).